The sequence spans 223 residues: Sigma non-opioid intracellular receptor 1 (223 aa).

The Lumenal portion of the chain corresponds to 1-9 (MQWALGRRW). The segment at 2 to 8 (QWALGRR) is targeting to endoplasmic reticulum-associated lipid droplets. A helical transmembrane segment spans residues 10 to 30 (VWAALLLAAAAVLTQVVWLWL). At 31-223 (GTQSFVFQHE…FTTYLFGQDS (193 aa)) the chain is on the cytoplasmic side. The segment at 99–106 (SLSEYVLL) is important for ligand-binding. Positions 177 to 223 (VIPSTLAFALADTIFSTQDFLTLFYTLRAYARGLRLEFTTYLFGQDS) are C-terminal hydrophobic region.

This sequence belongs to the ERG2 family. In terms of assembly, homotrimer. Forms a ternary complex with ANK2 and ITPR3. The complex is disrupted by agonists. Interacts with KCNA4. Interacts with KCNA2; cocaine consumption leads to increased interaction. Interacts with RNF112 in an oxidative stress-regulated manner.

Its subcellular location is the nucleus inner membrane. The protein resides in the nucleus outer membrane. It localises to the nucleus envelope. It is found in the cytoplasmic vesicle. The protein localises to the endoplasmic reticulum membrane. Its subcellular location is the membrane. The protein resides in the lipid droplet. It localises to the cell junction. It is found in the cell membrane. The protein localises to the cell projection. Its subcellular location is the growth cone. The protein resides in the postsynaptic density membrane. Functions in lipid transport from the endoplasmic reticulum and is involved in a wide array of cellular functions probably through regulation of the biogenesis of lipid microdomains at the plasma membrane. Involved in the regulation of different receptors it plays a role in BDNF signaling and EGF signaling. Also regulates ion channels like the potassium channel and could modulate neurotransmitter release. Plays a role in calcium signaling through modulation together with ANK2 of the ITP3R-dependent calcium efflux at the endoplasmic reticulum. Plays a role in several other cell functions including proliferation, survival and death. Originally identified for its ability to bind various psychoactive drugs it is involved in learning processes, memory and mood alteration. Necessary for proper mitochondrial axonal transport in motor neurons, in particular the retrograde movement of mitochondria. Plays a role in protecting cells against oxidative stress-induced cell death via its interaction with RNF112. The protein is Sigma non-opioid intracellular receptor 1 (SIGMAR1) of Mustela erminea (Ermine).